A 189-amino-acid chain; its full sequence is Small ribosomal subunit protein uS4 (189 aa).

Residues R107–D181 enclose the S4 RNA-binding domain. The disordered stretch occupies residues Q161 to E189.

Belongs to the universal ribosomal protein uS4 family. As to quaternary structure, component of the small ribosomal subunit. Part of the small subunit (SSU) processome, composed of more than 70 proteins and the RNA chaperone small nucleolar RNA (snoRNA) U3.

It is found in the cytoplasm. It localises to the nucleus. The protein resides in the nucleolus. Component of the small ribosomal subunit. The ribosome is a large ribonucleoprotein complex responsible for the synthesis of proteins in the cell. Part of the small subunit (SSU) processome, first precursor of the small eukaryotic ribosomal subunit. During the assembly of the SSU processome in the nucleolus, many ribosome biogenesis factors, an RNA chaperone and ribosomal proteins associate with the nascent pre-rRNA and work in concert to generate RNA folding, modifications, rearrangements and cleavage as well as targeted degradation of pre-ribosomal RNA by the RNA exosome. The sequence is that of Small ribosomal subunit protein uS4 (rps-9) from Caenorhabditis elegans.